Consider the following 1067-residue polypeptide: FHIP family protein GL19323 (1067 aa).

Positions 1-11 (MSWLRSSPLRQ) are enriched in polar residues. Disordered regions lie at residues 1–31 (MSWL…GSLR), 503–525 (LARP…QPIQ), and 832–1013 (NENS…SEPA). 2 positions are modified to phosphoserine: serine 508 and serine 835. Over residues 842-858 (QPQTTLSQQQQQQQGQQ) the composition is skewed to low complexity. Polar residues predominate over residues 859-878 (RSAYATLSAATPVQATQTSA). Over residues 893–904 (SKSISSMFSRRS) the composition is skewed to low complexity. The segment covering 918–949 (LVGNNNSGSGQSQPFSSTGTGTCETSLSTNPQ) has biased composition (polar residues). Over residues 950 to 979 (SGAAAARSTGTATTANGNSSNSNISIGGST) the composition is skewed to low complexity. A compositionally biased stretch (polar residues) spans 980–996 (QTLSGHSNTTTYSSSTL).

The protein belongs to the FHIP family.

The polypeptide is FHIP family protein GL19323 (Drosophila persimilis (Fruit fly)).